A 312-amino-acid chain; its full sequence is MRNSIDLTKKIKEKAFEEGFDAVGIAKVPGSSRIKLRTASLERWLQAGHQATMEWMKSPRRKDIENMLQGVKSILAVGLNYYVDTERESKDISIARYGWGKDYHKIIEEKLKKVAKFLETERPNAKWKICVDTSAFLDKAWAEEAGIGWIGKHSNVINSEIGSWMFLGHLLSTEVLEADKPSKPICGECEKCIEACPTKAIEEPFIVNSYKCLAYHTLENRDQELPENIINKMGNWIAGCDICQDVCPWNQKHIPSTTEPDLQPSEWILHTTKQDLLSWDDAKWKESLKNSALKRIKPWMWRRNIDSISKKT.

Asp-132 acts as the Proton donor in catalysis. One can recognise a 4Fe-4S ferredoxin-type 1 domain in the interval 174-206; that stretch reads EVLEADKPSKPICGECEKCIEACPTKAIEEPFI. Residues Cys-186, Cys-189, Cys-192, Cys-196, Cys-212, Cys-240, Cys-243, and Cys-247 each contribute to the [4Fe-4S] cluster site. Residues 226–257 form the 4Fe-4S ferredoxin-type 2 domain; it reads PENIINKMGNWIAGCDICQDVCPWNQKHIPST.

The protein belongs to the QueG family. In terms of assembly, monomer. It depends on cob(II)alamin as a cofactor. The cofactor is [4Fe-4S] cluster.

The protein resides in the cytoplasm. It carries out the reaction epoxyqueuosine(34) in tRNA + AH2 = queuosine(34) in tRNA + A + H2O. Its pathway is tRNA modification; tRNA-queuosine biosynthesis. Catalyzes the conversion of epoxyqueuosine (oQ) to queuosine (Q), which is a hypermodified base found in the wobble positions of tRNA(Asp), tRNA(Asn), tRNA(His) and tRNA(Tyr). The protein is Epoxyqueuosine reductase of Prochlorococcus marinus (strain NATL2A).